The primary structure comprises 639 residues: UvrABC system protein C (639 aa).

The GIY-YIG domain maps to 20 to 97; the sequence is ERSGVYRMFD…IKKFQPKFNI (78 aa). A UVR domain is found at 207–242; it reads KELQENLSRKMEELSSQMRFEEAAEIRDRIKALSYV.

It belongs to the UvrC family. As to quaternary structure, interacts with UvrB in an incision complex.

The protein localises to the cytoplasm. Functionally, the UvrABC repair system catalyzes the recognition and processing of DNA lesions. UvrC both incises the 5' and 3' sides of the lesion. The N-terminal half is responsible for the 3' incision and the C-terminal half is responsible for the 5' incision. In Rickettsia africae (strain ESF-5), this protein is UvrABC system protein C.